Here is a 146-residue protein sequence, read N- to C-terminus: D-aminoacyl-tRNA deacylase (146 aa).

Positions 138–139 match the Gly-cisPro motif, important for rejection of L-amino acids motif; sequence GP.

Belongs to the DTD family. In terms of assembly, homodimer.

The protein resides in the cytoplasm. The enzyme catalyses glycyl-tRNA(Ala) + H2O = tRNA(Ala) + glycine + H(+). It catalyses the reaction a D-aminoacyl-tRNA + H2O = a tRNA + a D-alpha-amino acid + H(+). An aminoacyl-tRNA editing enzyme that deacylates mischarged D-aminoacyl-tRNAs. Also deacylates mischarged glycyl-tRNA(Ala), protecting cells against glycine mischarging by AlaRS. Acts via tRNA-based rather than protein-based catalysis; rejects L-amino acids rather than detecting D-amino acids in the active site. By recycling D-aminoacyl-tRNA to D-amino acids and free tRNA molecules, this enzyme counteracts the toxicity associated with the formation of D-aminoacyl-tRNA entities in vivo and helps enforce protein L-homochirality. This is D-aminoacyl-tRNA deacylase from Xanthomonas campestris pv. campestris (strain 8004).